The following is a 390-amino-acid chain: Elongation factor Ts, mitochondrial (390 aa).

This sequence belongs to the EF-Ts family.

It localises to the mitochondrion. Associates with the EF-Tu.GDP complex and induces the exchange of GDP to GTP. It remains bound to the aminoacyl-tRNA.EF-Tu.GTP complex up to the GTP hydrolysis stage on the ribosome. The protein is Elongation factor Ts, mitochondrial of Plasmodium vivax (strain Salvador I).